A 117-amino-acid chain; its full sequence is Large ribosomal subunit protein bL20c (117 aa).

Belongs to the bacterial ribosomal protein bL20 family.

The protein resides in the plastid. It is found in the chloroplast. In terms of biological role, binds directly to 23S ribosomal RNA and is necessary for the in vitro assembly process of the 50S ribosomal subunit. It is not involved in the protein synthesizing functions of that subunit. The polypeptide is Large ribosomal subunit protein bL20c (Acorus gramineus (Dwarf sweet flag)).